Reading from the N-terminus, the 97-residue chain is MKIRPLHDRVIVKRKEAESKSAGGIVLTGSAAGKSTRGTVTAVGNGRILDNGSIKPLDVKVGETVIFNEGYGAKIEKIDNEELLILTESDILAIVEE.

Belongs to the GroES chaperonin family. As to quaternary structure, heptamer of 7 subunits arranged in a ring. Interacts with the chaperonin GroEL.

It localises to the cytoplasm. Functionally, together with the chaperonin GroEL, plays an essential role in assisting protein folding. The GroEL-GroES system forms a nano-cage that allows encapsulation of the non-native substrate proteins and provides a physical environment optimized to promote and accelerate protein folding. GroES binds to the apical surface of the GroEL ring, thereby capping the opening of the GroEL channel. This Buchnera aphidicola subsp. Geoica urticularia protein is Co-chaperonin GroES.